The following is an 86-amino-acid chain: Polcalcin Che a 3 (86 aa).

2 consecutive EF-hand domains span residues 8–43 (QDIA…LGSV) and 43–78 (VTPD…NRGL). The Ca(2+) site is built by D21, N23, D25, K27, E32, D56, D58, D60, and E67.

This is Polcalcin Che a 3 from Chenopodium album (Fat hen).